The chain runs to 123 residues: Galectin-2 (123 aa).

The Galectin domain maps to 4 to 123 (KVEIMNMDMK…LRYLSVQGGF (120 aa)). 65–71 (WGKEQRD) is a binding site for a beta-D-galactoside.

As to quaternary structure, homodimer.

This protein binds beta-galactoside. Its physiological function is not yet known. The polypeptide is Galectin-2 (LGALS2) (Sus scrofa (Pig)).